The chain runs to 255 residues: Diphthine synthase (255 aa).

Residues leucine 9, aspartate 85, valine 88, 113-114, leucine 164, alanine 207, and histidine 232 contribute to the S-adenosyl-L-methionine site; that span reads SI.

Belongs to the diphthine synthase family. In terms of assembly, homodimer.

It carries out the reaction 2-[(3S)-amino-3-carboxypropyl]-L-histidyl-[translation elongation factor 2] + 3 S-adenosyl-L-methionine = diphthine-[translation elongation factor 2] + 3 S-adenosyl-L-homocysteine + 3 H(+). It functions in the pathway protein modification; peptidyl-diphthamide biosynthesis. In terms of biological role, S-adenosyl-L-methionine-dependent methyltransferase that catalyzes the trimethylation of the amino group of the modified target histidine residue in translation elongation factor 2 (EF-2), to form an intermediate called diphthine. The three successive methylation reactions represent the second step of diphthamide biosynthesis. The protein is Diphthine synthase of Methanococcus vannielii (strain ATCC 35089 / DSM 1224 / JCM 13029 / OCM 148 / SB).